A 395-amino-acid chain; its full sequence is S-adenosylmethionine synthase (395 aa).

Residue H16 coordinates ATP. D18 contributes to the Mg(2+) binding site. E44 contributes to the K(+) binding site. The L-methionine site is built by E57 and Q100. The segment at 100–110 (QSPDIAQGVDD) is flexible loop. ATP is bound by residues 174–176 (DAK), 241–242 (RF), D250, 256–257 (RK), A273, and K277. D250 is a binding site for L-methionine. K281 lines the L-methionine pocket.

The protein belongs to the AdoMet synthase family. In terms of assembly, homotetramer; dimer of dimers. Mg(2+) serves as cofactor. The cofactor is K(+).

The protein localises to the cytoplasm. The enzyme catalyses L-methionine + ATP + H2O = S-adenosyl-L-methionine + phosphate + diphosphate. It participates in amino-acid biosynthesis; S-adenosyl-L-methionine biosynthesis; S-adenosyl-L-methionine from L-methionine: step 1/1. Catalyzes the formation of S-adenosylmethionine (AdoMet) from methionine and ATP. The overall synthetic reaction is composed of two sequential steps, AdoMet formation and the subsequent tripolyphosphate hydrolysis which occurs prior to release of AdoMet from the enzyme. This is S-adenosylmethionine synthase from Limosilactobacillus reuteri (strain DSM 20016) (Lactobacillus reuteri).